A 317-amino-acid polypeptide reads, in one-letter code: Cytochrome f (317 aa).

An N-terminal signal peptide occupies residues 1–34 (MKGLKNQIMKKTSLFICTLLFILSIVFYPKITFA). Heme is bound by residues Tyr35, Cys55, Cys58, and His59. Residues 284-304 (VIGLIAFFIGVGLTQILLVLK) form a helical membrane-spanning segment.

Belongs to the cytochrome f family. The 4 large subunits of the cytochrome b6-f complex are cytochrome b6, subunit IV (17 kDa polypeptide, PetD), cytochrome f and the Rieske protein, while the 4 small subunits are PetG, PetL, PetM and PetN. The complex functions as a dimer. Heme serves as cofactor.

Its subcellular location is the cellular thylakoid membrane. Component of the cytochrome b6-f complex, which mediates electron transfer between photosystem II (PSII) and photosystem I (PSI), cyclic electron flow around PSI, and state transitions. The polypeptide is Cytochrome f (Prochlorococcus marinus (strain MIT 9215)).